A 634-amino-acid chain; its full sequence is ATP-dependent clpX-like chaperone, mitochondrial (634 aa).

Residues 1–56 (MSSCGACTCGAAAARLLTTSLTSAQRGISCGRIHVPVLGRLGTTLDAQALRRAPLR) constitute a mitochondrion transit peptide. The segment at 69-102 (DGANKDGSGDGNKKSVTEGSSKKSGSGNSGKGGN) is disordered. The segment covering 70–84 (GANKDGSGDGNKKSV) has biased composition (basic and acidic residues). Residues 85–94 (TEGSSKKSGS) are compositionally biased toward low complexity. Residues 94-147 (SGNSGKGGNQLRCPKCGDLCTHVETFVSSTRFVKCEKCHHFFVVLSEADSKKSI) form the ClpX-type ZB domain. The Zn(2+) site is built by C106, C109, C128, and C131. Residue 295–302 (PTGSGKTL) participates in ATP binding. K438 carries the post-translational modification N6-acetyllysine. A compositionally biased stretch (basic and acidic residues) spans 599–611 (KEPGYIRAPSKES). A disordered region spans residues 599–634 (KEPGYIRAPSKESSEEEYDSGVEEDGWPRQADAANS). The segment covering 612-623 (SEEEYDSGVEED) has biased composition (acidic residues). A Phosphoserine modification is found at S618.

Belongs to the ClpX chaperone family. As to quaternary structure, homohexamer that forms a ring structure; this hexamerization requires ATP binding. Component of the ClpXP complex formed by the assembly of two CLPP heptameric rings with two CLPX hexameric rings, giving rise to a symmetrical structure with two central CLPP rings flanked by a CLPX ring at either end of the complex. Interacts with TFAM. In terms of tissue distribution, detected in liver (at protein level).

Its subcellular location is the mitochondrion. The protein localises to the mitochondrion matrix. It is found in the mitochondrion nucleoid. The catalysed reaction is ATP + H2O = ADP + phosphate + H(+). Its function is as follows. ATP-dependent chaperone that functions as an unfoldase. As part of the ClpXP protease complex, it recognizes specific protein substrates, unfolds them using energy derived from ATP hydrolysis, and then translocates them to the proteolytic subunit (CLPP) of the ClpXP complex for degradation. Thanks to its chaperone activity, it also functions in the incorporation of the pyridoxal phosphate cofactor into 5-aminolevulinate synthase, thereby activating 5-aminolevulinate (ALA) synthesis, the first step in heme biosynthesis. This chaperone is also involved in the control of mtDNA nucleoid distribution, by regulating mitochondrial transcription factor A (TFAM) activity. This is ATP-dependent clpX-like chaperone, mitochondrial from Mus musculus (Mouse).